Here is a 410-residue protein sequence, read N- to C-terminus: MNFDTLKKFDEEIYEVIQKETKRQRGSIELIASENFVTTAVMEAMGSQLTNKYAEGYPDKRYYGGCEEVDVAENLARNRLKKLFNAEHANVQPHSGANANIGVYFATLEPGDTVLGMNLSHGGHLTHGSPVNISGAYYNFVAYGVDSVTHRIDYEEVMRVAQEAKPKMIVAGASAYPRAIDFKKFREIADAVGAYLMVDMAHIAGLVAVGLHQNPCEYADFVTTTTHKTLRGPRGGAILCKEKYAKIIDKAIFPGLQGGPLMHVIAAKAVAFKEALEPGFKAYQEQVIKNAKALGEELKKQGFDLVSDGTDTHLLLIDLRNKNITGKDAERLFDEVGITVNKNTIPFDPQSPFVTSGIRIGTPAVTTRGMKEEEMKKIAGVMNIIIDHPEKVSEAQKVVDELCNQFKLYE.

Residues L119 and 123-125 (GHL) each bind (6S)-5,6,7,8-tetrahydrofolate. K228 bears the N6-(pyridoxal phosphate)lysine mark. 351 to 353 (SPF) is a (6S)-5,6,7,8-tetrahydrofolate binding site.

Belongs to the SHMT family. As to quaternary structure, homodimer. The cofactor is pyridoxal 5'-phosphate.

Its subcellular location is the cytoplasm. It catalyses the reaction (6R)-5,10-methylene-5,6,7,8-tetrahydrofolate + glycine + H2O = (6S)-5,6,7,8-tetrahydrofolate + L-serine. It participates in one-carbon metabolism; tetrahydrofolate interconversion. It functions in the pathway amino-acid biosynthesis; glycine biosynthesis; glycine from L-serine: step 1/1. Its function is as follows. Catalyzes the reversible interconversion of serine and glycine with tetrahydrofolate (THF) serving as the one-carbon carrier. This reaction serves as the major source of one-carbon groups required for the biosynthesis of purines, thymidylate, methionine, and other important biomolecules. Also exhibits THF-independent aldolase activity toward beta-hydroxyamino acids, producing glycine and aldehydes, via a retro-aldol mechanism. The polypeptide is Serine hydroxymethyltransferase (Alkaliphilus metalliredigens (strain QYMF)).